We begin with the raw amino-acid sequence, 456 residues long: MSFDFLKYIKKVHFIGIGGISMSGMAEILLKKGYKVSGSDSTKSPIIDKLINLGAEIYIGHKAENIKNVDLIVYTAAVSEDNPELTKALTNNIKIMNRAEFLGYLMDGHKYNIAVSGTHGKTTTTSMMSHITVNANLDPTILVGGELNIINGNVRTGKSEYFLTEACEYKESFLKFFPYIGVILNIDADHLDYYKDINHIKNAFSKFANLIPKDGYLIACAEDENINDIIKNIDCTIITYGLNKGDIQAKNITFDNKGCASFDVIKNSSVLFSVKLNVPGSYNVLNALASICVSFALNIDKESIIKGLESFHGTHRRFELKGVRNDVTVIEDYAHHPTEIKATLSAAKNYPSNRILCVFQPHTYTRTYSLFEDFTESFYNTDTLILADIYPAREKDTGIVSSDMLGNKLRKKNINCINLHSFEDISDYLKKETKPGDLVLIMGAGDIYKAGDLFLK.

Gly-117–Thr-123 serves as a coordination point for ATP.

The protein belongs to the MurCDEF family.

It is found in the cytoplasm. The enzyme catalyses UDP-N-acetyl-alpha-D-muramate + L-alanine + ATP = UDP-N-acetyl-alpha-D-muramoyl-L-alanine + ADP + phosphate + H(+). The protein operates within cell wall biogenesis; peptidoglycan biosynthesis. Its function is as follows. Cell wall formation. This is UDP-N-acetylmuramate--L-alanine ligase from Clostridium tetani (strain Massachusetts / E88).